The following is a 298-amino-acid chain: Bifunctional protein FolD (298 aa).

NADP(+)-binding positions include 165-167, serine 190, and isoleucine 231; that span reads GRS.

The protein belongs to the tetrahydrofolate dehydrogenase/cyclohydrolase family. As to quaternary structure, homodimer.

The catalysed reaction is (6R)-5,10-methylene-5,6,7,8-tetrahydrofolate + NADP(+) = (6R)-5,10-methenyltetrahydrofolate + NADPH. It catalyses the reaction (6R)-5,10-methenyltetrahydrofolate + H2O = (6R)-10-formyltetrahydrofolate + H(+). The protein operates within one-carbon metabolism; tetrahydrofolate interconversion. Catalyzes the oxidation of 5,10-methylenetetrahydrofolate to 5,10-methenyltetrahydrofolate and then the hydrolysis of 5,10-methenyltetrahydrofolate to 10-formyltetrahydrofolate. This chain is Bifunctional protein FolD, found in Prochlorococcus marinus (strain MIT 9312).